The chain runs to 433 residues: Enolase (433 aa).

Glutamine 167 contributes to the (2R)-2-phosphoglycerate binding site. Glutamate 209 serves as the catalytic Proton donor. Positions 246, 291, and 318 each coordinate Mg(2+). Positions 343, 372, 373, and 394 each coordinate (2R)-2-phosphoglycerate. The active-site Proton acceptor is the lysine 343.

It belongs to the enolase family. As to quaternary structure, component of the RNA degradosome, a multiprotein complex involved in RNA processing and mRNA degradation. Mg(2+) serves as cofactor.

Its subcellular location is the cytoplasm. It localises to the secreted. It is found in the cell surface. It carries out the reaction (2R)-2-phosphoglycerate = phosphoenolpyruvate + H2O. The protein operates within carbohydrate degradation; glycolysis; pyruvate from D-glyceraldehyde 3-phosphate: step 4/5. Its function is as follows. Catalyzes the reversible conversion of 2-phosphoglycerate (2-PG) into phosphoenolpyruvate (PEP). It is essential for the degradation of carbohydrates via glycolysis. This chain is Enolase, found in Shewanella piezotolerans (strain WP3 / JCM 13877).